A 334-amino-acid polypeptide reads, in one-letter code: Glyceraldehyde-3-phosphate dehydrogenase 1 (334 aa).

NAD(+) contacts are provided by residues 11-12, Asp-33, Arg-77, and Ser-119; that span reads RI. Residues 150 to 152 and Thr-181 contribute to the D-glyceraldehyde 3-phosphate site; that span reads SCT. The active-site Nucleophile is the Cys-151. Asn-182 provides a ligand contact to NAD(+). D-glyceraldehyde 3-phosphate is bound by residues Arg-196, 209 to 210, and Arg-232; that span reads TG. Asn-314 contacts NAD(+).

The protein belongs to the glyceraldehyde-3-phosphate dehydrogenase family. In terms of assembly, homotetramer.

It is found in the cytoplasm. The enzyme catalyses D-glyceraldehyde 3-phosphate + phosphate + NAD(+) = (2R)-3-phospho-glyceroyl phosphate + NADH + H(+). The protein operates within carbohydrate degradation; glycolysis; pyruvate from D-glyceraldehyde 3-phosphate: step 1/5. Catalyzes the oxidative phosphorylation of glyceraldehyde 3-phosphate (G3P) to 1,3-bisphosphoglycerate (BPG) using the cofactor NAD. The first reaction step involves the formation of a hemiacetal intermediate between G3P and a cysteine residue, and this hemiacetal intermediate is then oxidized to a thioester, with concomitant reduction of NAD to NADH. The reduced NADH is then exchanged with the second NAD, and the thioester is attacked by a nucleophilic inorganic phosphate to produce BPG. This is Glyceraldehyde-3-phosphate dehydrogenase 1 (gap1) from Bacillus cereus.